Reading from the N-terminus, the 141-residue chain is Large ribosomal subunit protein uL11 (141 aa).

This sequence belongs to the universal ribosomal protein uL11 family. Part of the ribosomal stalk of the 50S ribosomal subunit. Interacts with L10 and the large rRNA to form the base of the stalk. L10 forms an elongated spine to which L12 dimers bind in a sequential fashion forming a multimeric L10(L12)X complex. One or more lysine residues are methylated.

Its function is as follows. Forms part of the ribosomal stalk which helps the ribosome interact with GTP-bound translation factors. The chain is Large ribosomal subunit protein uL11 from Oceanobacillus iheyensis (strain DSM 14371 / CIP 107618 / JCM 11309 / KCTC 3954 / HTE831).